Reading from the N-terminus, the 58-residue chain is Histatherin (58 aa).

The first 19 residues, 1–19 (MKIFIFIFIMALILAMIRA), serve as a signal peptide directing secretion.

This sequence belongs to the histatin/statherin family. Expressed in mammary glands.

It is found in the secreted. In Bos taurus (Bovine), this protein is Histatherin.